A 107-amino-acid polypeptide reads, in one-letter code: Growth-regulated alpha protein (107 aa).

The first 34 residues, 1-34, serve as a signal peptide directing secretion; that stretch reads MARAALSAAPSNPRLLRVALLLLLLVAAGRRAAG. 2 cysteine pairs are disulfide-bonded: Cys43-Cys69 and Cys45-Cys85.

This sequence belongs to the intercrine alpha (chemokine CxC) family. In terms of processing, N-terminal processed forms GRO-alpha(4-73), GRO-alpha(5-73) and GRO-alpha(6-73) are produced by proteolytic cleavage after secretion from peripheral blood monocytes.

It localises to the secreted. Has chemotactic activity for neutrophils. May play a role in inflammation and exerts its effects on endothelial cells in an autocrine fashion. In vitro, the processed forms GRO-alpha(4-73), GRO-alpha(5-73) and GRO-alpha(6-73) show a 30-fold higher chemotactic activity. This Homo sapiens (Human) protein is Growth-regulated alpha protein (CXCL1).